Consider the following 377-residue polypeptide: Pulmonary surfactant-associated protein B (377 aa).

An N-terminal signal peptide occupies residues 1-22 (MAKSHLLQWLLLLPTLCCPGAA). A propeptide spanning residues 23-191 (ITSASSLECA…PHTQDFSEQQ (169 aa)) is cleaved from the precursor. One can recognise a Saposin A-type domain in the interval 24–64 (TSASSLECAQGPQFWCQSLEHAVQCRALGHCLQEVWGHAGA). Saposin B-type domains follow at residues 64–146 (ANDL…PRGQ), 195–272 (PLPF…STED), and 291–366 (QDTE…EAPA). 9 disulfides stabilise this stretch: cysteine 68–cysteine 142, cysteine 71–cysteine 136, cysteine 99–cysteine 111, cysteine 199–cysteine 268, cysteine 202–cysteine 262, cysteine 226–cysteine 237, cysteine 295–cysteine 362, cysteine 298–cysteine 356, and cysteine 321–cysteine 331. A propeptide spanning residues 271–377 (EDAMGPALPA…PLQCFQTPHL (107 aa)) is cleaved from the precursor. Asparagine 307 carries an N-linked (GlcNAc...) asparagine glycan.

In terms of assembly, homodimer; disulfide-linked.

The protein localises to the secreted. Its subcellular location is the extracellular space. It is found in the surface film. Pulmonary surfactant-associated proteins promote alveolar stability by lowering the surface tension at the air-liquid interface in the peripheral air spaces. SP-B increases the collapse pressure of palmitic acid to nearly 70 millinewtons per meter. This chain is Pulmonary surfactant-associated protein B (Sftpb), found in Mus musculus (Mouse).